Here is a 39-residue protein sequence, read N- to C-terminus: Omega-theraphotoxin-Ba1b (39 aa).

3 disulfides stabilise this stretch: Cys-4–Cys-17, Cys-8–Cys-31, and Cys-25–Cys-36.

The protein belongs to the neurotoxin 12 (Hwtx-2) family. 06 (TXP1) subfamily. In terms of tissue distribution, expressed by the venom gland.

It localises to the secreted. Functionally, inhibits voltage-gated calcium channels (Cav) in rat cerebellar granule cells. Has insecticidal activity to crickets (Acheta domesticus). Is not toxic to mice. This Brachypelma albiceps (Mexican golden redrump tarantula) protein is Omega-theraphotoxin-Ba1b.